Consider the following 339-residue polypeptide: DNA-directed RNA polymerase subunit alpha (339 aa).

An alpha N-terminal domain (alpha-NTD) region spans residues 1–233 (MVREEVAGST…DLFLPFLHAE (233 aa)). Residues 264–339 (KKGIPLNCIF…IDLLKNKLSF (76 aa)) form an alpha C-terminal domain (alpha-CTD) region.

This sequence belongs to the RNA polymerase alpha chain family. In terms of assembly, in plastids the minimal PEP RNA polymerase catalytic core is composed of four subunits: alpha, beta, beta', and beta''. When a (nuclear-encoded) sigma factor is associated with the core the holoenzyme is formed, which can initiate transcription.

It is found in the plastid. Its subcellular location is the chloroplast. It catalyses the reaction RNA(n) + a ribonucleoside 5'-triphosphate = RNA(n+1) + diphosphate. Functionally, DNA-dependent RNA polymerase catalyzes the transcription of DNA into RNA using the four ribonucleoside triphosphates as substrates. This chain is DNA-directed RNA polymerase subunit alpha, found in Crithopsis delileana.